We begin with the raw amino-acid sequence, 179 residues long: ATP synthase subunit b, chloroplastic (179 aa).

Residues 28–46 (IINIAALVGILIYAGRDFL) traverse the membrane as a helical segment.

Belongs to the ATPase B chain family. F-type ATPases have 2 components, F(1) - the catalytic core - and F(0) - the membrane proton channel. F(1) has five subunits: alpha(3), beta(3), gamma(1), delta(1), epsilon(1). F(0) has four main subunits: a(1), b(1), b'(1) and c(10-14). The alpha and beta chains form an alternating ring which encloses part of the gamma chain. F(1) is attached to F(0) by a central stalk formed by the gamma and epsilon chains, while a peripheral stalk is formed by the delta, b and b' chains.

Its subcellular location is the plastid. It localises to the chloroplast thylakoid membrane. F(1)F(0) ATP synthase produces ATP from ADP in the presence of a proton or sodium gradient. F-type ATPases consist of two structural domains, F(1) containing the extramembraneous catalytic core and F(0) containing the membrane proton channel, linked together by a central stalk and a peripheral stalk. During catalysis, ATP synthesis in the catalytic domain of F(1) is coupled via a rotary mechanism of the central stalk subunits to proton translocation. Functionally, component of the F(0) channel, it forms part of the peripheral stalk, linking F(1) to F(0). The protein is ATP synthase subunit b, chloroplastic of Trieres chinensis (Marine centric diatom).